The primary structure comprises 289 residues: Mas-related G-protein coupled receptor member G (289 aa).

The Extracellular portion of the chain corresponds to 1–13; sequence MFSIFNIWGTFNK. A helical membrane pass occupies residues 14 to 34; that stretch reads VLFFLSLTVSLAGLVGNALLL. The Cytoplasmic portion of the chain corresponds to 35–52; it reads WHLGLHIKKGPFNTYLLH. A helical transmembrane segment spans residues 53–73; that stretch reads LAAADFLFLSCQVGFSIATIV. Topologically, residues 74-78 are extracellular; that stretch reads SGHED. Residues 79-99 form a helical membrane-spanning segment; sequence TLYFPVTFLWFAVGLWLLAAF. At 100–120 the chain is on the cytoplasmic side; the sequence is SVDCCLAYMFPSFCSPNRRPR. Residues 121-141 traverse the membrane as a helical segment; that stretch reads FTSVVLCLVIWALTMPAVLLP. The Extracellular segment spans residues 142-164; it reads ANACGLLKNGMSLLVCLKYHWTS. A helical membrane pass occupies residues 165–185; it reads VTWLAVLSGMACGASKFLLIF. The Cytoplasmic portion of the chain corresponds to 186–199; the sequence is GNCCSSQPPPKFCK. The chain crosses the membrane as a helical span at residues 200–220; the sequence is LAQCSGILLFFCRLPLVVYWC. Residues 221–222 lie on the Extracellular side of the membrane; the sequence is LR. A helical transmembrane segment spans residues 223–243; the sequence is PVLKFLLPFFFPLATLLACID. Over 244–289 the chain is Cytoplasmic; sequence SSAKPLLYYMKGRQLRKDPLQVALNRALGEESQSGLGGLSLPMHQV.

This sequence belongs to the G-protein coupled receptor 1 family. Mas subfamily.

The protein resides in the cell membrane. Functionally, orphan receptor. May regulate nociceptor function and/or development, including the sensation or modulation of pain. This Mus musculus (Mouse) protein is Mas-related G-protein coupled receptor member G (Mrgprg).